The sequence spans 219 residues: Large ribosomal subunit protein bL25 (219 aa).

The interval 194–219 (SSTELEETPEVPASAVPTTDQGESAE) is disordered. Polar residues predominate over residues 209–219 (VPTTDQGESAE).

It belongs to the bacterial ribosomal protein bL25 family. CTC subfamily. In terms of assembly, part of the 50S ribosomal subunit; part of the 5S rRNA/L5/L18/L25 subcomplex. Contacts the 5S rRNA. Binds to the 5S rRNA independently of L5 and L18.

This is one of the proteins that binds to the 5S RNA in the ribosome where it forms part of the central protuberance. This chain is Large ribosomal subunit protein bL25, found in Legionella pneumophila (strain Paris).